Here is a 184-residue protein sequence, read N- to C-terminus: CDP-archaeol synthase (184 aa).

Transmembrane regions (helical) follow at residues 4–24 (IIMV…NPGA), 54–74 (FIGG…IIYI), 86–106 (IISA…GDIT), 122–142 (GSLL…FIFA), and 145–165 (FFLE…LTPP).

This sequence belongs to the CDP-archaeol synthase family. Mg(2+) is required as a cofactor.

It is found in the cell membrane. It catalyses the reaction 2,3-bis-O-(geranylgeranyl)-sn-glycerol 1-phosphate + CTP + H(+) = CDP-2,3-bis-O-(geranylgeranyl)-sn-glycerol + diphosphate. The protein operates within membrane lipid metabolism; glycerophospholipid metabolism. Its function is as follows. Catalyzes the formation of CDP-2,3-bis-(O-geranylgeranyl)-sn-glycerol (CDP-archaeol) from 2,3-bis-(O-geranylgeranyl)-sn-glycerol 1-phosphate (DGGGP) and CTP. This reaction is the third ether-bond-formation step in the biosynthesis of archaeal membrane lipids. This chain is CDP-archaeol synthase, found in Picrophilus torridus (strain ATCC 700027 / DSM 9790 / JCM 10055 / NBRC 100828 / KAW 2/3).